The sequence spans 158 residues: UPF0262 protein RSKD131_1985 (158 aa).

Belongs to the UPF0262 family.

The polypeptide is UPF0262 protein RSKD131_1985 (Cereibacter sphaeroides (strain KD131 / KCTC 12085) (Rhodobacter sphaeroides)).